The primary structure comprises 42 residues: uncharacterized protein (42 aa).

A disordered region spans residues 1–42 (MTTGKPQSFEKMRTPFPGRSKAKGPQSDIIPSAPPNTPVTEH). Residues 32 to 42 (SAPPNTPVTEH) are compositionally biased toward pro residues.

This is an uncharacterized protein from Schizosaccharomyces pombe (strain 972 / ATCC 24843) (Fission yeast).